Reading from the N-terminus, the 721-residue chain is Dolichyl-diphosphooligosaccharide--protein glycosyltransferase subunit STT3B (721 aa).

Residues 1–25 (MAAATALDSLPAPLRSLRLKTKQQE) are Cytoplasmic-facing. The helical transmembrane segment at 26 to 46 (LLLRVSALALIYVLAFVVRLF) threads the bilayer. Residues 47 to 129 (SVLRYESMIH…VHIREVCVLT (83 aa)) lie on the Lumenal side of the membrane. The DXD motif 1 motif lies at 57-59 (EFD). Asp59 is a Mn(2+) binding site. Residues 130 to 148 (APFFAANTTLVAYAFGREI) traverse the membrane as a helical segment. Residues 149 to 150 (WD) are Cytoplasmic-facing. A helical membrane pass occupies residues 151 to 168 (SGAGLVAAALIAVCPGYI). The Lumenal segment spans residues 169 to 179 (SRSVAGSYDNE). Asp177 and Glu179 together coordinate Mn(2+). The DXD motif 2 signature appears at 177-179 (DNE). The helical transmembrane segment at 180 to 199 (GVAIFALLLTFYLFVRAVNT) threads the bilayer. Over 200–201 (GS) the chain is Cytoplasmic. A helical membrane pass occupies residues 202-216 (LAWSLASAFGYFYMV). The Lumenal portion of the chain corresponds to 217–221 (SAWGG). A helical transmembrane segment spans residues 222–238 (YVFIINLLPLYVLVLLV). The Cytoplasmic segment spans residues 239–243 (TGRYS). The helical transmembrane segment at 244-269 (QRLYVAYNSTYVLGMLLAMQIRFVGF) threads the bilayer. The Lumenal segment spans residues 270-277 (QHVQSGEH). Residues 278–297 (MAAMGVFFLLQVFFFLDWVK) traverse the membrane as a helical segment. Residues 298–313 (YLLNDAKLFKSFLRIT) are Cytoplasmic-facing. The chain crosses the membrane as a helical span at residues 314-334 (LTCVITVGTLALGIGTASGYI). Over 335–367 (SPWTGRFYSLLDPTYAKDHIPIIASVSEHQPTA) the chain is Lumenal. Positions 359 to 362 (SVSE) match the SVSE motif motif. The helical transmembrane segment at 368–390 (WSSFMFDFHILLFLFPAGLYFCF) threads the bilayer. Residues 391–396 (KRLSDA) are Cytoplasmic-facing. Residues 397 to 413 (TIFIVMYGLTSMYFAGV) form a helical membrane-spanning segment. At 414–417 (MVRL) the chain is on the lumenal side. Arg416 is a binding site for dolichyl diphosphooligosaccharide. Residues 418 to 439 (ILVAAPAVCLISAIAASATIKN) form a helical membrane-spanning segment. The Cytoplasmic portion of the chain corresponds to 440-471 (LTTLIRTKSKSPQTVSGKSSGSKAAAKGAVDQ). A helical transmembrane segment spans residues 472–492 (SLPFQQNVAIALLLGAFYLLS). The Lumenal segment spans residues 493-721 (RYAVHCTWVT…YKVKPPKNRS (229 aa)). Residues 548–550 (WWD) are interacts with target acceptor peptide in protein substrate. Residues 548–552 (WWDYG) carry the WWDYG motif motif. Tyr553 serves as a coordination point for dolichyl diphosphooligosaccharide. 2 N-linked (GlcNAc...) asparagine glycosylation sites follow: Asn560 and Asn567. N-linked (GlcNAc...) (high mannose) asparagine glycosylation occurs at Asn571. The DK motif motif lies at 615–622 (DINKFLWM).

This sequence belongs to the STT3 family. In terms of assembly, component of the oligosaccharyltransferase (OST) complex. The cofactor is Mg(2+). Mn(2+) is required as a cofactor.

Its subcellular location is the endoplasmic reticulum membrane. The enzyme catalyses a di-trans,poly-cis-dolichyl diphosphooligosaccharide + L-asparaginyl-[protein] = N(4)-(oligosaccharide-(1-&gt;4)-N-acetyl-beta-D-glucosaminyl-(1-&gt;4)-N-acetyl-beta-D-glucosaminyl)-L-asparaginyl-[protein] + a di-trans,poly-cis-dolichyl diphosphate + H(+). Its pathway is protein modification; protein glycosylation. Its function is as follows. Catalytic subunit of the oligosaccharyl transferase (OST) complex that catalyzes the initial transfer of a defined glycan (Glc(3)Man(9)GlcNAc(2) in eukaryotes) from the lipid carrier dolichol-pyrophosphate to an asparagine residue within an Asn-X-Ser/Thr consensus motif in nascent polypeptide chains, the first step in protein N-glycosylation. N-glycosylation occurs cotranslationally and the complex associates with the Sec61 complex at the channel-forming translocon complex that mediates protein translocation across the endoplasmic reticulum (ER). All subunits are required for a maximal enzyme activity. This subunit contains the active site and the acceptor peptide and donor lipid-linked oligosaccharide (LLO) binding pockets. This is Dolichyl-diphosphooligosaccharide--protein glycosyltransferase subunit STT3B (STT3B) from Oryza sativa subsp. japonica (Rice).